A 251-amino-acid chain; its full sequence is Ubiquinone/menaquinone biosynthesis C-methyltransferase UbiE (251 aa).

Residues T74, D95, and 123 to 124 each bind S-adenosyl-L-methionine; that span reads NA.

This sequence belongs to the class I-like SAM-binding methyltransferase superfamily. MenG/UbiE family.

The catalysed reaction is a 2-demethylmenaquinol + S-adenosyl-L-methionine = a menaquinol + S-adenosyl-L-homocysteine + H(+). It catalyses the reaction a 2-methoxy-6-(all-trans-polyprenyl)benzene-1,4-diol + S-adenosyl-L-methionine = a 5-methoxy-2-methyl-3-(all-trans-polyprenyl)benzene-1,4-diol + S-adenosyl-L-homocysteine + H(+). It functions in the pathway quinol/quinone metabolism; menaquinone biosynthesis; menaquinol from 1,4-dihydroxy-2-naphthoate: step 2/2. The protein operates within cofactor biosynthesis; ubiquinone biosynthesis. Its function is as follows. Methyltransferase required for the conversion of demethylmenaquinol (DMKH2) to menaquinol (MKH2) and the conversion of 2-polyprenyl-6-methoxy-1,4-benzoquinol (DDMQH2) to 2-polyprenyl-3-methyl-6-methoxy-1,4-benzoquinol (DMQH2). The chain is Ubiquinone/menaquinone biosynthesis C-methyltransferase UbiE from Marinomonas sp. (strain MWYL1).